Reading from the N-terminus, the 186-residue chain is Photosystem I assembly protein Ycf4 (186 aa).

2 consecutive transmembrane segments (helical) span residues 22–42 and 57–77; these read FCWAFILFLGSLGFLLVGTSS and IIFFPQGIVMSFYGIAGLFIS.

It belongs to the Ycf4 family.

The protein resides in the plastid. It localises to the chloroplast thylakoid membrane. Functionally, seems to be required for the assembly of the photosystem I complex. This chain is Photosystem I assembly protein Ycf4, found in Vitis vinifera (Grape).